Reading from the N-terminus, the 201-residue chain is uncharacterized protein (201 aa).

The interval 1–22 (MAASKAAKSSEDRAGGGGGGGG) is disordered.

This is an uncharacterized protein from Tomato ringspot virus (isolate raspberry) (ToRSV).